The following is a 94-amino-acid chain: Co-chaperonin GroES (94 aa).

It belongs to the GroES chaperonin family. In terms of assembly, heptamer of 7 subunits arranged in a ring. Interacts with the chaperonin GroEL.

The protein resides in the cytoplasm. Its function is as follows. Together with the chaperonin GroEL, plays an essential role in assisting protein folding. The GroEL-GroES system forms a nano-cage that allows encapsulation of the non-native substrate proteins and provides a physical environment optimized to promote and accelerate protein folding. GroES binds to the apical surface of the GroEL ring, thereby capping the opening of the GroEL channel. This is Co-chaperonin GroES from Clostridium botulinum (strain Eklund 17B / Type B).